The following is a 1489-amino-acid chain: FERM domain-containing protein C (1489 aa).

Polar residues-rich tracts occupy residues 59 to 79 (DTESNYGGGANSITNTPNFNS) and 103 to 118 (NSPLHKSATRPISTSI). 4 disordered regions span residues 59–86 (DTESNYGGGANSITNTPNFNSHRGHQHL), 103–197 (NSPL…PSTL), 252–271 (NSVQNDIVDSDNNNNNNNNN), and 277–312 (EQQQEKQQQQQQHHHHHSTPNKPPKSRSVSISTPDS). Residues 131–153 (SSSSSSSDGDSNSSSDSSDNSSE) show a composition bias toward low complexity. Residues 163 to 172 (HLHLHRHHRK) are compositionally biased toward basic residues. Residues 181-195 (FESSSESSEQYGSPS) are compositionally biased toward low complexity. Positions 202-289 (ALKLEKIMQI…QEKQQQQQQH (88 aa)) form a coiled coil. Residues 277-287 (EQQQEKQQQQQ) are compositionally biased toward low complexity. Positions 303-312 (RSVSISTPDS) are enriched in polar residues. Residues 356 to 383 (IKVSKVLEEEMQLQQEFEKQEQLRHSAR) adopt a coiled-coil conformation. Disordered stretches follow at residues 396–435 (NLQDQQDQQLRKNENSNNNEGDDNNENVSNDNSSDNENQN), 459–479 (VITPPPPAQEPQHQQQPKILT), and 508–569 (EDPL…TTTT). Low complexity predominate over residues 421–435 (ENVSNDNSSDNENQN). Over residues 545–555 (TASSSSSPTLQ) the composition is skewed to polar residues. Low complexity predominate over residues 556–569 (ATKTTTTTTTTTTT). The 298-residue stretch at 637–934 (ILVHISLVDQ…GYKYFIQHDE (298 aa)) folds into the FERM domain. 13 LRR repeats span residues 1017–1040 (KVELPSLNLRGSDLSFIADALKDT), 1053–1075 (ENLNILSLDLSNNPLLATDAFEP), 1087–1110 (HLNLKNIGLSNKGVMPLVTIIEKY), 1111–1133 (PNIETLQIGKNRVNESGVRVILR), 1167–1191 (NKTIKNLNISKNLITEEGFHHIFEG), 1196–1219 (SLSLQDLNISGNKINSKLMIKFIK), 1254–1278 (SCHIKSLDTSYNDLGTSGTKNVIKG), 1282–1306 (NQTITELSLCANKISSSGCNDLCQS), 1339–1362 (NKTITTLDLSMNEFSKSSSSAIGT), 1367–1391 (NETLQEFYLADSSLGAREVESILNG), 1395–1418 (NSTIKKIFLDTNPIGKKGISSLAN), 1428–1450 (VITLRHTNLNGKDILELLKQLST), and 1451–1474 (NIPIKIINLTENTLDKITPQIKNA).

The protein is FERM domain-containing protein C (frmC) of Dictyostelium discoideum (Social amoeba).